The chain runs to 446 residues: Glucose transporter GlcP (446 aa).

Over 1-6 (MKANKY) the chain is Cytoplasmic. Residues 7–31 (LIFILGALGGLLYGYDNGVISGALL) traverse the membrane as a helical segment. Residues 32–38 (FIHKDIP) lie on the Extracellular side of the membrane. A helical transmembrane segment spans residues 39–64 (LNSTTEGIVVSSMLIGAIVGAGSSGP). Topologically, residues 65 to 70 (LADKLG) are cytoplasmic. Residues 71–90 (RRRLVMLIAIVFIIGALILA) traverse the membrane as a helical segment. The Extracellular segment spans residues 91–94 (ASTN). Residues 95–122 (LALLIIGRLIIGLAVGGSMSTVPVYLSE) traverse the membrane as a helical segment. Over 123 to 129 (MAPTEYR) the chain is Cytoplasmic. A helical transmembrane segment spans residues 130-152 (GSLGSLNQLMITIGILAAYLVNY). Residues 153–154 (AF) lie on the Extracellular side of the membrane. The helical transmembrane segment at 155–180 (ADIEGWRWMLGLAVVPSVILLVGIYF) threads the bilayer. Residues 181–234 (MPESPRWLLENRNEEAARQVMKITYDDSEIDKELKEMKEINAISESTWTVIKSP) lie on the Cytoplasmic side of the membrane. A helical transmembrane segment spans residues 235–269 (WLGRILIVGCIFAIFQQFIGINAVIFYSSSIFAKA). The Extracellular portion of the chain corresponds to 270 to 272 (GLG). Residues 273–295 (EAASILGSVGIGTINVLVTIVAI) traverse the membrane as a helical segment. At 296 to 303 (FVVDKIDR) the chain is on the cytoplasmic side. A helical transmembrane segment spans residues 304–324 (KKLLVGGNIGMIASLLIMAIL). Residues 325 to 329 (IWTIG) are Extracellular-facing. Residues 330-363 (IASSAWIIIVCLSLFIVFFGISWGPVLWVMLPEL) traverse the membrane as a helical segment. The Cytoplasmic portion of the chain corresponds to 364 to 370 (FPMRARG). The chain crosses the membrane as a helical span at residues 371–399 (AATGISALVLNIGTLIVSLFFPILSDALS). Topologically, residues 400 to 401 (TE) are extracellular. Residues 402-420 (WVFLIFAFIGVLAMIFVIK) traverse the membrane as a helical segment. At 421-446 (FLPETRGRSLEEIEYELRERTGARTE) the chain is on the cytoplasmic side.

This sequence belongs to the major facilitator superfamily. Sugar transporter (TC 2.A.1.1) family.

The protein localises to the cell membrane. With respect to regulation, inhibited by carbonyl cyanide m-chlorophenylhydrazone (CCCP) and by the human glucose transport inhibitors cytochalasin B, phloretin, and forskolin. Its function is as follows. Transporter highly specific for glucose uptake. This Staphylococcus epidermidis (strain ATCC 12228 / FDA PCI 1200) protein is Glucose transporter GlcP.